Consider the following 476-residue polypeptide: Bifunctional protein HldE (476 aa).

Residues 1-319 form a ribokinase region; that stretch reads MKVSLPAFEK…EALALHHGES (319 aa). 195–198 contributes to the ATP binding site; that stretch reads NMSE. Aspartate 264 is a catalytic residue. The cytidylyltransferase stretch occupies residues 345-476; that stretch reads MTNGCFDILH…AIIQNIMANQ (132 aa).

The protein in the N-terminal section; belongs to the carbohydrate kinase PfkB family. It in the C-terminal section; belongs to the cytidylyltransferase family. Homodimer.

It catalyses the reaction D-glycero-beta-D-manno-heptose 7-phosphate + ATP = D-glycero-beta-D-manno-heptose 1,7-bisphosphate + ADP + H(+). The catalysed reaction is D-glycero-beta-D-manno-heptose 1-phosphate + ATP + H(+) = ADP-D-glycero-beta-D-manno-heptose + diphosphate. It participates in nucleotide-sugar biosynthesis; ADP-L-glycero-beta-D-manno-heptose biosynthesis; ADP-L-glycero-beta-D-manno-heptose from D-glycero-beta-D-manno-heptose 7-phosphate: step 1/4. The protein operates within nucleotide-sugar biosynthesis; ADP-L-glycero-beta-D-manno-heptose biosynthesis; ADP-L-glycero-beta-D-manno-heptose from D-glycero-beta-D-manno-heptose 7-phosphate: step 3/4. In terms of biological role, catalyzes the phosphorylation of D-glycero-D-manno-heptose 7-phosphate at the C-1 position to selectively form D-glycero-beta-D-manno-heptose-1,7-bisphosphate. Functionally, catalyzes the ADP transfer from ATP to D-glycero-beta-D-manno-heptose 1-phosphate, yielding ADP-D-glycero-beta-D-manno-heptose. In Shewanella baltica (strain OS195), this protein is Bifunctional protein HldE.